Here is a 143-residue protein sequence, read N- to C-terminus: Large ribosomal subunit protein bL17 (143 aa).

The span at 124–133 (GAGDRARLEA) shows a compositional bias: basic and acidic residues. The tract at residues 124–143 (GAGDRARLEAEGTDAEAAAA) is disordered.

It belongs to the bacterial ribosomal protein bL17 family. In terms of assembly, part of the 50S ribosomal subunit. Contacts protein L32.

This Mesorhizobium japonicum (strain LMG 29417 / CECT 9101 / MAFF 303099) (Mesorhizobium loti (strain MAFF 303099)) protein is Large ribosomal subunit protein bL17.